A 332-amino-acid chain; its full sequence is L-lactate dehydrogenase A chain (332 aa).

NAD(+) is bound by residues 29–57 (GAVG…VEDK) and arginine 99. Residues arginine 106, asparagine 138, and arginine 169 each contribute to the substrate site. Residue asparagine 138 coordinates NAD(+). Residue histidine 193 is the Proton acceptor of the active site. Threonine 248 serves as a coordination point for substrate.

This sequence belongs to the LDH/MDH superfamily. LDH family. Homotetramer.

It localises to the cytoplasm. It carries out the reaction (S)-lactate + NAD(+) = pyruvate + NADH + H(+). It functions in the pathway fermentation; pyruvate fermentation to lactate; (S)-lactate from pyruvate: step 1/1. In terms of biological role, interconverts simultaneously and stereospecifically pyruvate and lactate with concomitant interconversion of NADH and NAD(+). The chain is L-lactate dehydrogenase A chain (LDHA) from Gallus gallus (Chicken).